Consider the following 519-residue polypeptide: Methionine--tRNA ligase (519 aa).

The 'HIGH' region motif lies at 11-21; it reads AYPNAAPHVGH. A 'KMSKS' region motif is present at residues 299-303; the sequence is KMSKS. Lys302 contributes to the ATP binding site. Residues 500–519 are disordered; the sequence is LPPPTGVFPRYQPPQPPEGK.

This sequence belongs to the class-I aminoacyl-tRNA synthetase family. MetG type 2B subfamily. As to quaternary structure, monomer.

Its subcellular location is the cytoplasm. It carries out the reaction tRNA(Met) + L-methionine + ATP = L-methionyl-tRNA(Met) + AMP + diphosphate. Is required not only for elongation of protein synthesis but also for the initiation of all mRNA translation through initiator tRNA(fMet) aminoacylation. The chain is Methionine--tRNA ligase (metG) from Mycobacterium tuberculosis (strain CDC 1551 / Oshkosh).